A 336-amino-acid polypeptide reads, in one-letter code: Probable allantoicase (336 aa).

This sequence belongs to the allantoicase family.

The enzyme catalyses allantoate + H2O = (S)-ureidoglycolate + urea. The protein operates within nitrogen metabolism; (S)-allantoin degradation; (S)-ureidoglycolate from allantoate (aminidohydrolase route): step 1/1. In Acinetobacter baumannii (strain ACICU), this protein is Probable allantoicase.